Consider the following 161-residue polypeptide: Large ribosomal subunit protein uL15 (161 aa).

The disordered stretch occupies residues 1–43; that stretch reads MKLSDIADNAGARKKRMRVGRGIGSGKGKTSGRGGKGQTARSG. Positions 21–37 are enriched in gly residues; that stretch reads RGIGSGKGKTSGRGGKG.

It belongs to the universal ribosomal protein uL15 family. In terms of assembly, part of the 50S ribosomal subunit.

Its function is as follows. Binds to the 23S rRNA. The polypeptide is Large ribosomal subunit protein uL15 (Bradyrhizobium sp. (strain ORS 278)).